We begin with the raw amino-acid sequence, 348 residues long: Dihydroorotase (348 aa).

Residues histidine 17 and histidine 19 each coordinate Zn(2+). Residues 19 to 21 (HLR) and asparagine 45 each bind substrate. Zn(2+)-binding residues include lysine 103, histidine 140, and histidine 178. An N6-carboxylysine modification is found at lysine 103. Position 140 (histidine 140) interacts with substrate. A substrate-binding site is contributed by leucine 223. A Zn(2+)-binding site is contributed by aspartate 251. Aspartate 251 is an active-site residue. Substrate is bound by residues histidine 255 and alanine 267.

This sequence belongs to the metallo-dependent hydrolases superfamily. DHOase family. Class II DHOase subfamily. In terms of assembly, homodimer. Zn(2+) is required as a cofactor.

It carries out the reaction (S)-dihydroorotate + H2O = N-carbamoyl-L-aspartate + H(+). The protein operates within pyrimidine metabolism; UMP biosynthesis via de novo pathway; (S)-dihydroorotate from bicarbonate: step 3/3. Catalyzes the reversible cyclization of carbamoyl aspartate to dihydroorotate. In Salmonella agona (strain SL483), this protein is Dihydroorotase.